Consider the following 460-residue polypeptide: Argininosuccinate lyase (460 aa).

Belongs to the lyase 1 family. Argininosuccinate lyase subfamily.

It localises to the cytoplasm. It carries out the reaction 2-(N(omega)-L-arginino)succinate = fumarate + L-arginine. The protein operates within amino-acid biosynthesis; L-arginine biosynthesis; L-arginine from L-ornithine and carbamoyl phosphate: step 3/3. This is Argininosuccinate lyase from Staphylococcus haemolyticus (strain JCSC1435).